Here is a 499-residue protein sequence, read N- to C-terminus: Aspartyl/glutamyl-tRNA(Asn/Gln) amidotransferase subunit B (499 aa).

This sequence belongs to the GatB/GatE family. GatB subfamily. Heterotrimer of A, B and C subunits.

It carries out the reaction L-glutamyl-tRNA(Gln) + L-glutamine + ATP + H2O = L-glutaminyl-tRNA(Gln) + L-glutamate + ADP + phosphate + H(+). The catalysed reaction is L-aspartyl-tRNA(Asn) + L-glutamine + ATP + H2O = L-asparaginyl-tRNA(Asn) + L-glutamate + ADP + phosphate + 2 H(+). Functionally, allows the formation of correctly charged Asn-tRNA(Asn) or Gln-tRNA(Gln) through the transamidation of misacylated Asp-tRNA(Asn) or Glu-tRNA(Gln) in organisms which lack either or both of asparaginyl-tRNA or glutaminyl-tRNA synthetases. The reaction takes place in the presence of glutamine and ATP through an activated phospho-Asp-tRNA(Asn) or phospho-Glu-tRNA(Gln). This Bifidobacterium longum (strain DJO10A) protein is Aspartyl/glutamyl-tRNA(Asn/Gln) amidotransferase subunit B.